We begin with the raw amino-acid sequence, 509 residues long: Midnolin (509 aa).

Over residues 1–12 the composition is skewed to polar residues; sequence MDQHPSARSCSS. Residues 1 to 27 form a disordered region; sequence MDQHPSARSCSSRGAAPSCESVSGEPP. The 75-residue stretch at 28 to 102 folds into the Ubiquitin-like domain; it reads MNLYIHSTTG…LTLVPTVEAG (75 aa). Disordered regions lie at residues 172–295, 370–404, and 448–485; these read GSSE…NTPL, QCTS…ETQP, and KRLR…EGSL. Positions 176–190 are enriched in low complexity; the sequence is GTTGLSHGASGSASG. The segment covering 196–209 has biased composition (basic residues); sequence HNPHPHHPHQHPHH. Over residues 220–231 the composition is skewed to pro residues; that stretch reads AFPPSPSIPSIP. Residues 261–285 show a composition bias toward low complexity; sequence PSSACAPSPSSPSPAASCPEASCSA. Residues 286–295 are compositionally biased toward polar residues; the sequence is KTSGNCNTPL. Pro residues predominate over residues 376–386; it reads SPAPSPPPSPP. Low complexity predominate over residues 387-400; sequence HTTGLTGLPTTVPS.

Its subcellular location is the nucleus. The protein localises to the cytoplasm. It localises to the cytosol. The protein resides in the nucleolus. In terms of biological role, facilitates ubiquitin-independent proteasomal degradation of polycomb protein CBX4. Plays a role in inhibiting the activity of glucokinase GCK and both glucose-induced and basal insulin secretion. The chain is Midnolin (midn) from Danio rerio (Zebrafish).